The sequence spans 110 residues: Coiled-coil-helix-coiled-coil-helix domain-containing protein 5 (110 aa).

At Met1 the chain carries N-acetylmethionine. CHCH domains lie at 9–52 and 55–97; these read ARYC…PIIR and RQAC…QPPR. Short sequence motifs (cx9C motif) lie at residues 12 to 22, 34 to 44, 58 to 68, and 79 to 89; these read CGRELEQYGQC, CHYLKMSIAQC, CAQPFEAFEEC, and CAEHMRRFLQC. Cystine bridges form between Cys12-Cys44, Cys22-Cys34, Cys58-Cys89, and Cys68-Cys79.

In terms of assembly, monomer.

Its subcellular location is the mitochondrion intermembrane space. The polypeptide is Coiled-coil-helix-coiled-coil-helix domain-containing protein 5 (CHCHD5) (Homo sapiens (Human)).